Reading from the N-terminus, the 339-residue chain is Methylthioribose-1-phosphate isomerase (339 aa).

Residues 52 to 54, arginine 89, and glutamine 188 contribute to the substrate site; that span reads RGA. Aspartate 229 (proton donor) is an active-site residue. 239-240 contributes to the substrate binding site; it reads NK.

The protein belongs to the eIF-2B alpha/beta/delta subunits family. MtnA subfamily.

The enzyme catalyses 5-(methylsulfanyl)-alpha-D-ribose 1-phosphate = 5-(methylsulfanyl)-D-ribulose 1-phosphate. Its pathway is amino-acid biosynthesis; L-methionine biosynthesis via salvage pathway; L-methionine from S-methyl-5-thio-alpha-D-ribose 1-phosphate: step 1/6. Catalyzes the interconversion of methylthioribose-1-phosphate (MTR-1-P) into methylthioribulose-1-phosphate (MTRu-1-P). This chain is Methylthioribose-1-phosphate isomerase, found in Anaeromyxobacter dehalogenans (strain 2CP-C).